The chain runs to 635 residues: Threonine--tRNA ligase (635 aa).

In terms of domain architecture, TGS spans 1–61; that stretch reads MINISFPDGS…DNDCKFRILT (61 aa). The tract at residues 242 to 533 is catalytic; the sequence is DHRKLGRELD…LIEEYAGRFP (292 aa). Zn(2+) contacts are provided by C333, H384, and H510.

This sequence belongs to the class-II aminoacyl-tRNA synthetase family. In terms of assembly, homodimer. Zn(2+) is required as a cofactor.

The protein resides in the cytoplasm. The enzyme catalyses tRNA(Thr) + L-threonine + ATP = L-threonyl-tRNA(Thr) + AMP + diphosphate + H(+). In terms of biological role, catalyzes the attachment of threonine to tRNA(Thr) in a two-step reaction: L-threonine is first activated by ATP to form Thr-AMP and then transferred to the acceptor end of tRNA(Thr). Also edits incorrectly charged L-seryl-tRNA(Thr). The polypeptide is Threonine--tRNA ligase (Rickettsia rickettsii (strain Sheila Smith)).